Reading from the N-terminus, the 231-residue chain is Probable glutathione S-transferase GSTU1 (231 aa).

The GST N-terminal domain occupies 5-84; it reads KELVLLDFWV…YLDDAFPGTP (80 aa). Glutathione contacts are provided by residues S15, K42, I56, and 68–69; that span reads ES. Residues 97-220 enclose the GST C-terminal domain; sequence AAYARATARF…LPSPEKVYDF (124 aa).

This sequence belongs to the GST superfamily. Tau family.

It carries out the reaction RX + glutathione = an S-substituted glutathione + a halide anion + H(+). Functionally, conjugation of reduced glutathione to a wide number of exogenous and endogenous hydrophobic electrophiles. The protein is Probable glutathione S-transferase GSTU1 (GSTU1) of Oryza sativa subsp. japonica (Rice).